A 428-amino-acid chain; its full sequence is Serine--tRNA ligase (428 aa).

231–233 is an L-serine binding site; it reads TAE. Residues 262 to 264 and Val278 each bind ATP; that span reads RRE. Glu285 lines the L-serine pocket. 349-352 lines the ATP pocket; it reads EVSS. An L-serine-binding site is contributed by Ser384.

This sequence belongs to the class-II aminoacyl-tRNA synthetase family. Type-1 seryl-tRNA synthetase subfamily. In terms of assembly, homodimer. The tRNA molecule binds across the dimer.

It localises to the cytoplasm. The catalysed reaction is tRNA(Ser) + L-serine + ATP = L-seryl-tRNA(Ser) + AMP + diphosphate + H(+). The enzyme catalyses tRNA(Sec) + L-serine + ATP = L-seryl-tRNA(Sec) + AMP + diphosphate + H(+). It functions in the pathway aminoacyl-tRNA biosynthesis; selenocysteinyl-tRNA(Sec) biosynthesis; L-seryl-tRNA(Sec) from L-serine and tRNA(Sec): step 1/1. In terms of biological role, catalyzes the attachment of serine to tRNA(Ser). Is also able to aminoacylate tRNA(Sec) with serine, to form the misacylated tRNA L-seryl-tRNA(Sec), which will be further converted into selenocysteinyl-tRNA(Sec). In Chlamydia trachomatis serovar L2 (strain ATCC VR-902B / DSM 19102 / 434/Bu), this protein is Serine--tRNA ligase.